Reading from the N-terminus, the 130-residue chain is Small ribosomal subunit protein uS11 (130 aa).

This sequence belongs to the universal ribosomal protein uS11 family. In terms of assembly, part of the 30S ribosomal subunit.

In terms of biological role, located on the platform of the 30S subunit. In Thermoplasma acidophilum (strain ATCC 25905 / DSM 1728 / JCM 9062 / NBRC 15155 / AMRC-C165), this protein is Small ribosomal subunit protein uS11.